The primary structure comprises 443 residues: Tol-Pal system protein TolB (443 aa).

A signal peptide spans 1-33 (MKIGIINTKIRTVFSAFACMIAASLVCTMPARA).

Belongs to the TolB family. As to quaternary structure, the Tol-Pal system is composed of five core proteins: the inner membrane proteins TolA, TolQ and TolR, the periplasmic protein TolB and the outer membrane protein Pal. They form a network linking the inner and outer membranes and the peptidoglycan layer.

Its subcellular location is the periplasm. Its function is as follows. Part of the Tol-Pal system, which plays a role in outer membrane invagination during cell division and is important for maintaining outer membrane integrity. This is Tol-Pal system protein TolB from Brucella suis (strain ATCC 23445 / NCTC 10510).